A 247-amino-acid chain; its full sequence is Carboxy-S-adenosyl-L-methionine synthase (247 aa).

S-adenosyl-L-methionine-binding positions include Y40, 65–67, 90–91, 122–123, N137, and R204; these read GAS, DN, and DI.

Belongs to the class I-like SAM-binding methyltransferase superfamily. Cx-SAM synthase family. Homodimer.

It catalyses the reaction prephenate + S-adenosyl-L-methionine = carboxy-S-adenosyl-L-methionine + 3-phenylpyruvate + H2O. Functionally, catalyzes the conversion of S-adenosyl-L-methionine (SAM) to carboxy-S-adenosyl-L-methionine (Cx-SAM). This is Carboxy-S-adenosyl-L-methionine synthase from Pseudomonas putida (strain ATCC 700007 / DSM 6899 / JCM 31910 / BCRC 17059 / LMG 24140 / F1).